Consider the following 211-residue polypeptide: Dephospho-CoA kinase (211 aa).

The 204-residue stretch at Val-3 to Ala-206 folds into the DPCK domain. Ala-11–Thr-16 contacts ATP.

Belongs to the CoaE family.

The protein localises to the cytoplasm. It carries out the reaction 3'-dephospho-CoA + ATP = ADP + CoA + H(+). It participates in cofactor biosynthesis; coenzyme A biosynthesis; CoA from (R)-pantothenate: step 5/5. Catalyzes the phosphorylation of the 3'-hydroxyl group of dephosphocoenzyme A to form coenzyme A. In Anaeromyxobacter dehalogenans (strain 2CP-C), this protein is Dephospho-CoA kinase.